We begin with the raw amino-acid sequence, 416 residues long: Serine hydroxymethyltransferase 1 (416 aa).

Residues Leu-121 and 125-127 each bind (6S)-5,6,7,8-tetrahydrofolate; that span reads GHL. Lys-229 carries the post-translational modification N6-(pyridoxal phosphate)lysine. (6S)-5,6,7,8-tetrahydrofolate contacts are provided by residues Glu-245 and 354–356; that span reads SPF.

The protein belongs to the SHMT family. In terms of assembly, homodimer. Pyridoxal 5'-phosphate serves as cofactor.

It is found in the cytoplasm. It catalyses the reaction (6R)-5,10-methylene-5,6,7,8-tetrahydrofolate + glycine + H2O = (6S)-5,6,7,8-tetrahydrofolate + L-serine. The protein operates within one-carbon metabolism; tetrahydrofolate interconversion. It participates in amino-acid biosynthesis; glycine biosynthesis; glycine from L-serine: step 1/1. Catalyzes the reversible interconversion of serine and glycine with tetrahydrofolate (THF) serving as the one-carbon carrier. This reaction serves as the major source of one-carbon groups required for the biosynthesis of purines, thymidylate, methionine, and other important biomolecules. Also exhibits THF-independent aldolase activity toward beta-hydroxyamino acids, producing glycine and aldehydes, via a retro-aldol mechanism. The protein is Serine hydroxymethyltransferase 1 of Vibrio vulnificus (strain CMCP6).